The following is a 345-amino-acid chain: MVVDDSAVVRQVVAGLLADDPAIEVIAAVADPILAIARMKVQWPDVFVLDIEMPRMDGITFLKKIMAERPTPVVICSTLTEKGAQTSMAALSAGAVAIITKPKLGLKQFLVDASDDLISAVKAAARANVKRLQVVEKLTADAILPASDRHDAMLQTTERVVALGTSTGGTQALEVVLTALPRVTPGIVIVQHMPEKFTAEFANRLNGLCQITVREAKNNDRVVPGRALIAPGGKHMLLRRNGAQYSVEVLDGPLVNRHRPSVDVLFRSVARCAGANALGVIMTGMGDDGAAGLAEMRKAGARTLAQDEESCVVYGMPKEAVKRGGVERSVPLGAIAREIMAQMAG.

The Response regulatory domain occupies 1–116; sequence MVVDDSAVVR…KQFLVDASDD (116 aa). 4-aspartylphosphate is present on Asp-50. The 192-residue stretch at 154-345 folds into the CheB-type methylesterase domain; that stretch reads LQTTERVVAL…AREIMAQMAG (192 aa). Catalysis depends on residues Ser-166, His-192, and Asp-288.

The protein belongs to the CheB family. Phosphorylated by CheA. Phosphorylation of the N-terminal regulatory domain activates the methylesterase activity.

It localises to the cytoplasm. It catalyses the reaction [protein]-L-glutamate 5-O-methyl ester + H2O = L-glutamyl-[protein] + methanol + H(+). It carries out the reaction L-glutaminyl-[protein] + H2O = L-glutamyl-[protein] + NH4(+). In terms of biological role, involved in chemotaxis. Part of a chemotaxis signal transduction system that modulates chemotaxis in response to various stimuli. Catalyzes the demethylation of specific methylglutamate residues introduced into the chemoreceptors (methyl-accepting chemotaxis proteins or MCP) by CheR. Also mediates the irreversible deamidation of specific glutamine residues to glutamic acid. The polypeptide is Protein-glutamate methylesterase/protein-glutamine glutaminase 2 (Albidiferax ferrireducens (strain ATCC BAA-621 / DSM 15236 / T118) (Rhodoferax ferrireducens)).